Consider the following 209-residue polypeptide: Small ribosomal subunit protein uS4 (209 aa).

The interval 22–45 is disordered; it reads RGRNPLLRKPNPPGQHGMQRKKKS. An S4 RNA-binding domain is found at 93–154; the sequence is CRLDNIVYRL…KSKRLAIVTE (62 aa).

The protein belongs to the universal ribosomal protein uS4 family. As to quaternary structure, part of the 30S ribosomal subunit. Contacts protein S5. The interaction surface between S4 and S5 is involved in control of translational fidelity.

In terms of biological role, one of the primary rRNA binding proteins, it binds directly to 16S rRNA where it nucleates assembly of the body of the 30S subunit. Its function is as follows. With S5 and S12 plays an important role in translational accuracy. The sequence is that of Small ribosomal subunit protein uS4 from Chlamydia trachomatis serovar A (strain ATCC VR-571B / DSM 19440 / HAR-13).